Reading from the N-terminus, the 658-residue chain is Threonine--tRNA ligase (658 aa).

The 61-residue stretch at 1 to 61 (MSDVRVTVQR…AAGDVVEPIT (61 aa)) folds into the TGS domain. The interval 259 to 554 (DHRRLGAELD…LLEHYAGALP (296 aa)) is catalytic. Residues C353, H404, and H531 each coordinate Zn(2+).

Belongs to the class-II aminoacyl-tRNA synthetase family. As to quaternary structure, homodimer. Requires Zn(2+) as cofactor.

The protein resides in the cytoplasm. It carries out the reaction tRNA(Thr) + L-threonine + ATP = L-threonyl-tRNA(Thr) + AMP + diphosphate + H(+). Functionally, catalyzes the attachment of threonine to tRNA(Thr) in a two-step reaction: L-threonine is first activated by ATP to form Thr-AMP and then transferred to the acceptor end of tRNA(Thr). Also edits incorrectly charged L-seryl-tRNA(Thr). The chain is Threonine--tRNA ligase from Parafrankia sp. (strain EAN1pec).